The chain runs to 60 residues: Cytotoxin 5 (60 aa).

Cystine bridges form between Cys-3–Cys-21, Cys-14–Cys-38, Cys-42–Cys-53, and Cys-54–Cys-59.

The protein belongs to the three-finger toxin family. Short-chain subfamily. Type IA cytotoxin sub-subfamily. Monomer in solution; Homodimer and oligomer in the presence of negatively charged lipids forming a pore with a size ranging between 20 and 30 Angstroms. Expressed by the venom gland.

The protein resides in the secreted. It localises to the target cell membrane. In terms of biological role, shows cytolytic activity on many different cells by forming pore in lipid membranes. In vivo, increases heart rate or kills the animal by cardiac arrest. In addition, it binds to heparin with high affinity, interacts with Kv channel-interacting protein 1 (KCNIP1) in a calcium-independent manner, and binds to integrin alpha-V/beta-3 (ITGAV/ITGB3) with moderate affinity. The chain is Cytotoxin 5 from Naja kaouthia (Monocled cobra).